The following is a 607-amino-acid chain: Thymidine kinase (607 aa).

Disordered regions lie at residues 1–160 and 180–215; these read MAGF…ADST and DDKSDCESEDESNFRRPSSHSALKQKNGGKGKPSGL. A compositionally biased stretch (basic and acidic residues) spans 17 to 32; sequence KCQEDESPENERHENF. Polar residues-rich tracts occupy residues 88–106, 148–160, and 194–203; these read AAVTSNTGNSPGSRHTSCP, RKTSCTEGGADST, and RRPSSHSALK. Residue 291 to 298 participates in ATP binding; sequence GAPGVGKT. Glu-317 functions as the Proton acceptor in the catalytic mechanism. Residue Gln-355 participates in substrate binding. Position 445 (Arg-445) interacts with ATP. Substrate is bound at residue Arg-451.

The protein belongs to the herpesviridae thymidine kinase family. As to quaternary structure, homodimer.

The protein resides in the virion tegument. It is found in the host nucleus. It carries out the reaction thymidine + ATP = dTMP + ADP + H(+). Catalyzes the transfer of the gamma-phospho group of ATP to thymidine to generate dTMP in the salvage pathway of pyrimidine synthesis. The dTMP serves as a substrate for DNA polymerase during viral DNA replication. Allows the virus to be reactivated and to grow in non-proliferative cells lacking a high concentration of phosphorylated nucleic acid precursors. This is Thymidine kinase from Homo sapiens (Human).